The following is a 171-amino-acid chain: Translationally-controlled tumor protein homolog (171 aa).

Positions 1 to 171 (MIIYRDCISQ…FKDGLEMEKC (171 aa)) constitute a TCTP domain.

Belongs to the TCTP family. As to expression, expressed by the venom gland.

The protein resides in the secreted. Its function is as follows. Venom protein that causes edema, enhances vascular permeability and is likely related to the inflammatory activity of the venom. The protein is Translationally-controlled tumor protein homolog of Micrurus fulvius (Eastern coral snake).